The chain runs to 698 residues: Polyribonucleotide nucleotidyltransferase (698 aa).

D490 and D496 together coordinate Mg(2+). The 60-residue stretch at P558–I617 folds into the KH domain. An S1 motif domain is found at N627–K695.

This sequence belongs to the polyribonucleotide nucleotidyltransferase family. Mg(2+) serves as cofactor.

The protein resides in the cytoplasm. The enzyme catalyses RNA(n+1) + phosphate = RNA(n) + a ribonucleoside 5'-diphosphate. Involved in mRNA degradation. Catalyzes the phosphorolysis of single-stranded polyribonucleotides processively in the 3'- to 5'-direction. This chain is Polyribonucleotide nucleotidyltransferase, found in Elusimicrobium minutum (strain Pei191).